Consider the following 804-residue polypeptide: Phenylalanine--tRNA ligase beta subunit (804 aa).

In terms of domain architecture, tRNA-binding spans 40–161; the sequence is FSMIDYLIIG…KANLGDTEVY (122 aa). The B5 domain maps to 413 to 486; that stretch reads EYHQQVKVNY…KILNINLFQP (74 aa). Residues Asp464, Asp470, Glu473, and Glu474 each contribute to the Mg(2+) site. Residues 710 to 804 form the FDX-ACB domain; it reads DHYQEVTRDI…DLMKTKQILI (95 aa).

It belongs to the phenylalanyl-tRNA synthetase beta subunit family. Type 1 subfamily. Tetramer of two alpha and two beta subunits. The cofactor is Mg(2+).

It is found in the cytoplasm. It catalyses the reaction tRNA(Phe) + L-phenylalanine + ATP = L-phenylalanyl-tRNA(Phe) + AMP + diphosphate + H(+). In Mycoplasmoides gallisepticum (strain R(low / passage 15 / clone 2)) (Mycoplasma gallisepticum), this protein is Phenylalanine--tRNA ligase beta subunit.